We begin with the raw amino-acid sequence, 536 residues long: Formate--tetrahydrofolate ligase (536 aa).

51–58 (TPAGEGKT) lines the ATP pocket.

This sequence belongs to the formate--tetrahydrofolate ligase family.

The catalysed reaction is (6S)-5,6,7,8-tetrahydrofolate + formate + ATP = (6R)-10-formyltetrahydrofolate + ADP + phosphate. It participates in one-carbon metabolism; tetrahydrofolate interconversion. The polypeptide is Formate--tetrahydrofolate ligase (Thermoplasma acidophilum (strain ATCC 25905 / DSM 1728 / JCM 9062 / NBRC 15155 / AMRC-C165)).